We begin with the raw amino-acid sequence, 170 residues long: Cyclic pyranopterin monophosphate synthase (170 aa).

Residues 75-77 (MCH) and 115-116 (ME) contribute to the substrate site. Asp-130 is a catalytic residue.

The protein belongs to the MoaC family. In terms of assembly, homohexamer; trimer of dimers.

It carries out the reaction (8S)-3',8-cyclo-7,8-dihydroguanosine 5'-triphosphate = cyclic pyranopterin phosphate + diphosphate. It functions in the pathway cofactor biosynthesis; molybdopterin biosynthesis. Its function is as follows. Catalyzes the conversion of (8S)-3',8-cyclo-7,8-dihydroguanosine 5'-triphosphate to cyclic pyranopterin monophosphate (cPMP). This Bacillus velezensis (strain DSM 23117 / BGSC 10A6 / LMG 26770 / FZB42) (Bacillus amyloliquefaciens subsp. plantarum) protein is Cyclic pyranopterin monophosphate synthase.